Consider the following 439-residue polypeptide: Trigger factor (439 aa).

The PPIase FKBP-type domain occupies 162–247; the sequence is GDTVTIDYVG…IHEVKAKQLP (86 aa).

This sequence belongs to the FKBP-type PPIase family. Tig subfamily.

The protein resides in the cytoplasm. The enzyme catalyses [protein]-peptidylproline (omega=180) = [protein]-peptidylproline (omega=0). Involved in protein export. Acts as a chaperone by maintaining the newly synthesized protein in an open conformation. Functions as a peptidyl-prolyl cis-trans isomerase. The chain is Trigger factor from Lactobacillus delbrueckii subsp. bulgaricus (strain ATCC 11842 / DSM 20081 / BCRC 10696 / JCM 1002 / NBRC 13953 / NCIMB 11778 / NCTC 12712 / WDCM 00102 / Lb 14).